The following is an 89-amino-acid chain: MTLNTEAKQKIINKHQTHGTDTGSVEVQVAMLSERINQLSKHLQSNNHDFSSRQGLLKMIGQRKRLLNYVKKQSESRYSSLVTKLGIRG.

Residues 1 to 23 (MTLNTEAKQKIINKHQTHGTDTG) form a disordered region.

Belongs to the universal ribosomal protein uS15 family. As to quaternary structure, part of the 30S ribosomal subunit. Forms a bridge to the 50S subunit in the 70S ribosome, contacting the 23S rRNA.

In terms of biological role, one of the primary rRNA binding proteins, it binds directly to 16S rRNA where it helps nucleate assembly of the platform of the 30S subunit by binding and bridging several RNA helices of the 16S rRNA. Functionally, forms an intersubunit bridge (bridge B4) with the 23S rRNA of the 50S subunit in the ribosome. In Prochlorococcus marinus (strain SARG / CCMP1375 / SS120), this protein is Small ribosomal subunit protein uS15.